The sequence spans 465 residues: Cysteine--tRNA ligase (465 aa).

Residue Cys-27 coordinates Zn(2+). The 'HIGH' region motif lies at 29–39; it reads PTVYDDAHLGH. Zn(2+)-binding residues include Cys-207, His-237, and Glu-241. The 'KMSKS' region motif lies at 269–273; sequence KMSKS. Lys-272 contacts ATP.

The protein belongs to the class-I aminoacyl-tRNA synthetase family. In terms of assembly, monomer. The cofactor is Zn(2+).

The protein localises to the cytoplasm. The enzyme catalyses tRNA(Cys) + L-cysteine + ATP = L-cysteinyl-tRNA(Cys) + AMP + diphosphate. This Nitratiruptor sp. (strain SB155-2) protein is Cysteine--tRNA ligase.